A 175-amino-acid chain; its full sequence is Small ribosomal subunit protein uS7 (175 aa).

It belongs to the universal ribosomal protein uS7 family. As to quaternary structure, part of the 30S ribosomal subunit. Contacts proteins S9 and S11.

In terms of biological role, one of the primary rRNA binding proteins, it binds directly to 16S rRNA where it nucleates assembly of the head domain of the 30S subunit. Is located at the subunit interface close to the decoding center, probably blocks exit of the E-site tRNA. The chain is Small ribosomal subunit protein uS7 from Neorickettsia sennetsu (strain ATCC VR-367 / Miyayama) (Ehrlichia sennetsu).